Consider the following 185-residue polypeptide: MLELVYEEAREKMDKAIAALEKGLLRVRTGRASLSMLDGVKLDYYGTPTPINQAATVAIPESRLITIQPWDASVIKDIEKAILKSDLGLNPSNDGKIIRIAIPPLTEDRRKEMVKLVNKMSEEGKISVRNIRRDANETIKSMKKDGDIAEDLAFKGQDEVQKITDDFVKKVDDICAQKEKEILEF.

Belongs to the RRF family.

It is found in the cytoplasm. Responsible for the release of ribosomes from messenger RNA at the termination of protein biosynthesis. May increase the efficiency of translation by recycling ribosomes from one round of translation to another. The protein is Ribosome-recycling factor of Desulfatibacillum aliphaticivorans.